A 92-amino-acid polypeptide reads, in one-letter code: Phospholemman (92 aa).

Positions 1–20 are cleaved as a signal peptide; sequence MAPLHHILVLCVGFLTTATA. Over 21–35 the chain is Extracellular; that stretch reads EAPQEHDPFTYDYQS. The chain crosses the membrane as a helical span at residues 36–56; that stretch reads LRIGGLIIAGILFILGILIVL. The Cytoplasmic portion of the chain corresponds to 57 to 92; it reads SRRCRCKFNQQQRTGEPDEEEGTFRSSIRRLSTRRR. C60 carries the S-palmitoyl cysteine lipid modification. At C62 the chain carries S-glutathionyl cysteine; alternate. Residue C62 is the site of S-palmitoyl cysteine; alternate attachment. Residues 65-92 form a disordered region; it reads NQQQRTGEPDEEEGTFRSSIRRLSTRRR. At T79 the chain carries Phosphothreonine. S82 bears the Phosphoserine mark. 2 positions are modified to phosphoserine; by PKA and PKC: S83 and S88. The segment covering 83-92 has biased composition (basic residues); it reads SIRRLSTRRR. T89 carries the post-translational modification Phosphothreonine; by PKC.

It belongs to the FXYD family. Homotetramer. Monomer. Regulatory subunit of the sodium/potassium-transporting ATPase (NKA) which is composed of a catalytic alpha subunit, a non-catalytic beta subunit and an additional regulatory subunit. The monomeric form associates with NKA while the oligomeric form does not. Interacts with the catalytic alpha-1 subunit ATP1A1. Also interacts with the catalytic alpha-2 and alpha-3 subunits ATP1A2 and ATP1A3. Very little interaction with the alpha subunits ATP1A1, ATP1A2 or ATP1A3 when phosphorylated at Ser-83. Interacts with non-catalytic beta-1 subunit ATP1B1. Oxidative stress decreases interaction with ATP1A1 but increases interaction with ATP1B1. In terms of processing, major plasma membrane substrate for cAMP-dependent protein kinase (PKA) and protein kinase C (PKC) in several different tissues. Phosphorylated in response to insulin and adrenergic stimulation. Phosphorylation at Ser-88 stimulates sodium/potassium-transporting ATPase activity while the unphosphorylated form inhibits sodium/potassium-transporting ATPase activity. Phosphorylation increases tetramerization, decreases binding to ATP1A1 and reduces inhibition of ATP1A1 activity. Phosphorylation at Ser-83 leads to greatly reduced interaction with ATP1A1, ATP1A2 and ATP1A3. May be phosphorylated by DMPK. Palmitoylation increases half-life and stability and is enhanced upon phosphorylation at Ser-88 by PKA. In terms of tissue distribution, present in heart, esophagus, stomach, aorta, skeletal muscle, smooth muscle, and liver but absent from brain and kidney.

It is found in the cell membrane. Its subcellular location is the sarcolemma. The protein localises to the apical cell membrane. It localises to the membrane. The protein resides in the caveola. It is found in the T-tubule. In terms of biological role, associates with and regulates the activity of the sodium/potassium-transporting ATPase (NKA) which transports Na(+) out of the cell and K(+) into the cell. Inhibits NKA activity in its unphosphorylated state and stimulates activity when phosphorylated. Reduces glutathionylation of the NKA beta-1 subunit ATP1B1, thus reversing glutathionylation-mediated inhibition of ATP1B1. Contributes to female sexual development by maintaining the excitability of neurons which secrete gonadotropin-releasing hormone. The chain is Phospholemman from Canis lupus familiaris (Dog).